Reading from the N-terminus, the 222-residue chain is MSEFNFDPYRRYGGGMAPMAPQSRYVLPSYIERTAYGVKEMNPYNKLFEERIIFVGVQIDDTSANDIIAQMMTLEHIDSDRDITLYINSPGGSFTSLMAIYDTMQFVRPDIQTVCVGQAASAAAVLLAGGTKGKRTALPNSRILIHQPATEGTHGQASDVEIMANEIMRIRHQLETILAKHTGRSVEEISRDIERDKILTAEEAKEYGIVDDVLPYRKASLK.

Serine 121 serves as the catalytic Nucleophile. Histidine 146 is a catalytic residue.

It belongs to the peptidase S14 family. Fourteen ClpP subunits assemble into 2 heptameric rings which stack back to back to give a disk-like structure with a central cavity, resembling the structure of eukaryotic proteasomes.

It is found in the cytoplasm. It carries out the reaction Hydrolysis of proteins to small peptides in the presence of ATP and magnesium. alpha-casein is the usual test substrate. In the absence of ATP, only oligopeptides shorter than five residues are hydrolyzed (such as succinyl-Leu-Tyr-|-NHMec, and Leu-Tyr-Leu-|-Tyr-Trp, in which cleavage of the -Tyr-|-Leu- and -Tyr-|-Trp bonds also occurs).. In terms of biological role, cleaves peptides in various proteins in a process that requires ATP hydrolysis. Has a chymotrypsin-like activity. Plays a major role in the degradation of misfolded proteins. This Thermobifida fusca (strain YX) protein is ATP-dependent Clp protease proteolytic subunit 1.